A 646-amino-acid polypeptide reads, in one-letter code: Chaperone protein DnaK (646 aa).

T197 carries the phosphothreonine; by autocatalysis modification. The segment at 599–646 (QQGAQAGADPNAGSSQGAQAGTDYGTSGPKTGTADDVDYEVVNDDNDK) is disordered. The span at 610–628 (AGSSQGAQAGTDYGTSGPK) shows a compositional bias: polar residues. Residues 633–646 (DDVDYEVVNDDNDK) are compositionally biased toward acidic residues.

The protein belongs to the heat shock protein 70 family.

Acts as a chaperone. This is Chaperone protein DnaK from Treponema denticola (strain ATCC 35405 / DSM 14222 / CIP 103919 / JCM 8153 / KCTC 15104).